We begin with the raw amino-acid sequence, 259 residues long: MTATDRTPPPLKWLCLGNRDANDGFELFAHGIYARNGALVGSKLSLRERRQRVDLSAFLSGAPPLLAEAAVKHLLARLLCVHRHNTDLELLGKNFIPLHASSLGNAGVCERILASARQLQQHQVELCLLLAIDEQEPASAEYLTSLARLRDSGVRIALHPQRIDTDARQCFAEVDAGLCDYLGLDARLLAPGPLTRNLRQRKSIEYLNRLLVAQDIQMLCLNVDNEELHQQANALPFAFRHGRHYSEPFQAWPFSSPAC.

It is found in the cell inner membrane. In terms of biological role, positive regulation of toxA gene transcription. This chain is Exotoxin A regulatory protein (toxR), found in Pseudomonas aeruginosa (strain ATCC 15692 / DSM 22644 / CIP 104116 / JCM 14847 / LMG 12228 / 1C / PRS 101 / PAO1).